Consider the following 1128-residue polypeptide: Large proline-rich protein BAG6 (1128 aa).

The residue at position 1 (methionine 1) is an N-acetylmethionine. Residues 17–92 (LEVLVKTLDS…HLVERAPPQT (76 aa)) form the Ubiquitin-like domain. Disordered stretches follow at residues 87–126 (RAPP…SVHD), 185–267 (CRGG…NHPS), 380–435 (VTMT…AASH), 456–523 (IQDS…ALPG), and 555–598 (PGMA…SASD). The segment covering 95 to 108 (PSGASSGTGSASAT) has biased composition (low complexity). Serine 96 is modified (phosphoserine). The residue at position 117 (threonine 117) is a Phosphothreonine. Residues 189-201 (SQAQHSQPPSQMP) show a composition bias toward polar residues. Copy 1 of the repeat occupies 236 to 265 (RASAQSPGLSPSGPAPAGPTPAPETNAPNH). Positions 236-630 (RASAQSPGLS…MTSPTITVAM (395 aa)) are 4 X 29 AA approximate repeats. Low complexity predominate over residues 238–247 (SAQSPGLSPS). 2 stretches are compositionally biased toward pro residues: residues 248–257 (GPAPAGPTPA) and 388–402 (RPPP…PPGP). Over residues 403–412 (GQASSLAPSS) the composition is skewed to low complexity. The stretch at 410-438 (PSSTTVESSTEGAPPPGPAPPPAASHPRV) is repeat 2. 2 stretches are compositionally biased toward pro residues: residues 422–433 (APPPGPAPPPAA) and 502–515 (PTPP…PGGP). A compositionally biased stretch (low complexity) spans 564–581 (ATASASAGTTNTATTAGP). A run of 2 repeats spans residues 569-596 (SAGT…QPSA) and 602-630 (SQLL…TVAM). Over residues 583-594 (PGGPAQPPPPQP) the composition is skewed to pro residues. 2 disordered regions span residues 648 to 689 (QTAA…GLGP) and 939 to 1128 (VGDP…AEDP). A compositionally biased stretch (pro residues) spans 652–677 (PPAPPPPPPPPPPAPEQQTAPPPGSP). Residues 678–688 (PGGAGSPGGLG) show a composition bias toward gly residues. Phosphoserine occurs at positions 960 and 969. Residues 999–1016 (AAAETEPWAAAVPPEWVP) are compositionally biased toward low complexity. A required for interaction with GET4 region spans residues 1006–1036 (WAAAVPPEWVPIIQQDIQSQRKVKPQPPLSD). The Nuclear localization site motif lies at 1008 to 1050 (AAVPPEWVPIIQQDIQSQRKVKPQPPLSDAYLSGMPAKRRKTM). A sufficient for the delivery of client proteins to the endoplasmic reticulum region spans residues 1018–1128 (IQQDIQSQRK…NAHRAFAEDP (111 aa)). Threonine 1049 is subject to Phosphothreonine. The tract at residues 1054–1111 (GPQLLLSEAVSRAAKAAGARPLTSPESLSRDLEAPEVQESYRQQLRADIQKRLQEDPN) is BAG-similar domain, required and sufficient for interaction with UBL4A. Residues 1062–1072 (AVSRAAKAAGA) are compositionally biased toward low complexity. Phosphoserine is present on residues serine 1077 and serine 1113.

In terms of assembly, component of the BAG6/BAT3 complex, also named BAT3 complex, at least composed of BAG6, UBL4A and GET4/TRC35. Interacts with GET4; the interaction is direct and localizes BAG6 in the cytosol. Interacts with UBL4A; the interaction is direct and required for UBL4A protein stability. Interacts with AIFM1. Interacts with HSPA2. Interacts with CTCFL. Interacts with p300/EP300. Interacts (via ubiquitin-like domain) with RNF126; required for BAG6-dependent ubiquitination of proteins mislocalized to the cytosol. Interacts (via ubiquitin-like domain) with SGTA; SGTA competes with RNF126 by binding the same region of BAG6, thereby promoting deubiquitination of BAG6-target proteins and rescuing them from degradation. Interacts with ricin A chain. Interacts with VCP and AMFR; both form the VCP/p97-AMFR/gp78 complex. Interacts with SYVN1. Interacts with USP13; the interaction is direct and may mediate UBL4A deubiquitination. Interacts with ZFAND2B. Interacts with KPNA2. Interacts with UBQLN4. In terms of processing, ricin can induce a cleavage by the caspase CASP3. The released C-terminal peptide induces apoptosis.

The protein localises to the cytoplasm. Its subcellular location is the cytosol. The protein resides in the nucleus. It localises to the secreted. It is found in the extracellular exosome. ATP-independent molecular chaperone preventing the aggregation of misfolded and hydrophobic patches-containing proteins. Functions as part of a cytosolic protein quality control complex, the BAG6/BAT3 complex, which maintains these client proteins in a soluble state and participates in their proper delivery to the endoplasmic reticulum or alternatively can promote their sorting to the proteasome where they undergo degradation. The BAG6/BAT3 complex is involved in the post-translational delivery of tail-anchored/type II transmembrane proteins to the endoplasmic reticulum membrane. Recruited to ribosomes, it interacts with the transmembrane region of newly synthesized tail-anchored proteins and together with SGTA and ASNA1 mediates their delivery to the endoplasmic reticulum. Client proteins that cannot be properly delivered to the endoplasmic reticulum are ubiquitinated by RNF126, an E3 ubiquitin-protein ligase associated with BAG6 and are sorted to the proteasome. SGTA which prevents the recruitment of RNF126 to BAG6 may negatively regulate the ubiquitination and the proteasomal degradation of client proteins. Similarly, the BAG6/BAT3 complex also functions as a sorting platform for proteins of the secretory pathway that are mislocalized to the cytosol either delivering them to the proteasome for degradation or to the endoplasmic reticulum. The BAG6/BAT3 complex also plays a role in the endoplasmic reticulum-associated degradation (ERAD), a quality control mechanism that eliminates unwanted proteins of the endoplasmic reticulum through their retrotranslocation to the cytosol and their targeting to the proteasome. It maintains these retrotranslocated proteins in an unfolded yet soluble state condition in the cytosol to ensure their proper delivery to the proteasome. BAG6 is also required for selective ubiquitin-mediated degradation of defective nascent chain polypeptides by the proteasome. In this context, it may participate in the production of antigenic peptides and play a role in antigen presentation in immune response. BAG6 is also involved in endoplasmic reticulum stress-induced pre-emptive quality control, a mechanism that selectively attenuates the translocation of newly synthesized proteins into the endoplasmic reticulum and reroutes them to the cytosol for proteasomal degradation. BAG6 may ensure the proper degradation of these proteins and thereby protects the endoplasmic reticulum from protein overload upon stress. By inhibiting the polyubiquitination and subsequent proteasomal degradation of HSPA2 it may also play a role in the assembly of the synaptonemal complex during spermatogenesis. Also positively regulates apoptosis by interacting with and stabilizing the proapoptotic factor AIFM1. By controlling the steady-state expression of the IGF1R receptor, indirectly regulates the insulin-like growth factor receptor signaling pathway. Functionally, involved in DNA damage-induced apoptosis: following DNA damage, accumulates in the nucleus and forms a complex with p300/EP300, enhancing p300/EP300-mediated p53/TP53 acetylation leading to increase p53/TP53 transcriptional activity. When nuclear, may also act as a component of some chromatin regulator complex that regulates histone 3 'Lys-4' dimethylation (H3K4me2). Its function is as follows. Released extracellularly via exosomes, it is a ligand of the natural killer/NK cells receptor NCR3 and stimulates NK cells cytotoxicity. It may thereby trigger NK cells cytotoxicity against neighboring tumor cells and immature myeloid dendritic cells (DC). In terms of biological role, may mediate ricin-induced apoptosis. This Sus scrofa (Pig) protein is Large proline-rich protein BAG6.